Here is a 182-residue protein sequence, read N- to C-terminus: ATP synthase subunit b, chloroplastic (182 aa).

The chain crosses the membrane as a helical span at residues 33 to 55 (VLNIMLLLFGLIYVLKQFLGSLL).

It belongs to the ATPase B chain family. As to quaternary structure, F-type ATPases have 2 components, F(1) - the catalytic core - and F(0) - the membrane proton channel. F(1) has five subunits: alpha(3), beta(3), gamma(1), delta(1), epsilon(1). F(0) has four main subunits: a(1), b(1), b'(1) and c(10-14). The alpha and beta chains form an alternating ring which encloses part of the gamma chain. F(1) is attached to F(0) by a central stalk formed by the gamma and epsilon chains, while a peripheral stalk is formed by the delta, b and b' chains.

It is found in the plastid. The protein resides in the chloroplast thylakoid membrane. In terms of biological role, f(1)F(0) ATP synthase produces ATP from ADP in the presence of a proton or sodium gradient. F-type ATPases consist of two structural domains, F(1) containing the extramembraneous catalytic core and F(0) containing the membrane proton channel, linked together by a central stalk and a peripheral stalk. During catalysis, ATP synthesis in the catalytic domain of F(1) is coupled via a rotary mechanism of the central stalk subunits to proton translocation. Component of the F(0) channel, it forms part of the peripheral stalk, linking F(1) to F(0). This is ATP synthase subunit b, chloroplastic from Antithamnion sp. (Red alga).